Reading from the N-terminus, the 341-residue chain is MNIKDALALVVNGKDLSVEQMTDVMREVMTGKATDAQRGAFLVALRIKSETLDEITGAAKVMRELATKVVVNADNLVDTCGTGGDGANLFNVSTASAFVVAAAGGHVAKHGNRSVSSSTGSADVLEAAGVNLQMPADQVARAIETIGVGFMFAPAHHSAMKHAIGPRKELGLRTIFNMLGPMTNPAGVKNQVIGVFTKALCRPMAEVLGRLGSEHVLVVHSEDGLDELSIAAPSHVAEYHKGNVTEYTLSPADVGIEMQSLEGLGVATAEESLALINGAFAGSDEPAAQKAAAIIALNAGAAIYVSGLATSFKDGVAMAEDALATGAAREKLKELVEFSAL.

Residues Gly-81, Gly-84–Asp-85, Asn-91–Thr-94, Lys-109–Ser-117, and Ser-121 contribute to the 5-phospho-alpha-D-ribose 1-diphosphate site. Gly-81 is an anthranilate binding site. Mg(2+) is bound at residue Ser-93. Position 112 (Asn-112) interacts with anthranilate. Arg-167 serves as a coordination point for anthranilate. Asp-226 and Glu-227 together coordinate Mg(2+).

Belongs to the anthranilate phosphoribosyltransferase family. In terms of assembly, homodimer. It depends on Mg(2+) as a cofactor.

The enzyme catalyses N-(5-phospho-beta-D-ribosyl)anthranilate + diphosphate = 5-phospho-alpha-D-ribose 1-diphosphate + anthranilate. The protein operates within amino-acid biosynthesis; L-tryptophan biosynthesis; L-tryptophan from chorismate: step 2/5. Functionally, catalyzes the transfer of the phosphoribosyl group of 5-phosphorylribose-1-pyrophosphate (PRPP) to anthranilate to yield N-(5'-phosphoribosyl)-anthranilate (PRA). The polypeptide is Anthranilate phosphoribosyltransferase (Saccharophagus degradans (strain 2-40 / ATCC 43961 / DSM 17024)).